The chain runs to 259 residues: Protein N-terminal and lysine N-methyltransferase efm7 (259 aa).

Residues Trp-53, 80–82 (GAA), Asp-102, Trp-138, and Ala-164 each bind S-adenosyl-L-methionine.

It belongs to the class I-like SAM-binding methyltransferase superfamily. EFM7 family.

Its subcellular location is the cytoplasm. S-adenosyl-L-methionine-dependent protein methyltransferase that trimethylates the N-terminal glycine 'Gly-2' of elongation factor 1-alpha, before also catalyzing the mono- and dimethylation of 'Lys-3'. The sequence is that of Protein N-terminal and lysine N-methyltransferase efm7 from Emericella nidulans (strain FGSC A4 / ATCC 38163 / CBS 112.46 / NRRL 194 / M139) (Aspergillus nidulans).